Reading from the N-terminus, the 445-residue chain is Neuropeptide Y receptor type 5 (445 aa).

Residues 1-42 (MEFKLEEHFNKTFVTENNTAAARNAAFPAWEDYRGSVDDLQY) lie on the Extracellular side of the membrane. Residues N10 and N17 are each glycosylated (N-linked (GlcNAc...) asparagine). Residues 43 to 63 (FLIGLYTFVSLLGFMGNLLIL) traverse the membrane as a helical segment. The Cytoplasmic portion of the chain corresponds to 64–77 (MAVMKKRNQKTTVN). A helical transmembrane segment spans residues 78–98 (FLIGNLAFSDILVVLFCSPFT). Residues 99–117 (LTSVLLDQWMFGKAMCHIM) lie on the Extracellular side of the membrane. C114 and C198 are joined by a disulfide. A helical transmembrane segment spans residues 118–138 (PFLQCVSVLVSTLILISIAIV). Topologically, residues 139 to 156 (RYHMIKHPISNNLTANHG) are cytoplasmic. Residues 157–177 (YFLIATVWTLGFAICSPLPVF) form a helical membrane-spanning segment. Topologically, residues 178-208 (HSLVELKETFGSALLSSKYLCVESWPSDSYR) are extracellular. Residues 209-229 (IAFTISLLLVQYILPLVCLTV) traverse the membrane as a helical segment. Residues 230–368 (SHTSVCRSIS…KKRSRSVFYR (139 aa)) are Cytoplasmic-facing. Residues 369–389 (LTILILVFAVSWMPLHVFHVV) traverse the membrane as a helical segment. The Extracellular portion of the chain corresponds to 390-406 (TDFNDNLISNRHFKLVY). Residues 407-427 (CICHLLGMMSCCLNPILYGFL) form a helical membrane-spanning segment. Residues 428 to 445 (NNGIKADLRALIHCLHMS) are Cytoplasmic-facing. A lipid anchor (S-palmitoyl cysteine) is attached at C441.

This sequence belongs to the G-protein coupled receptor 1 family. As to expression, brain; hypothalamus.

It localises to the cell membrane. In terms of biological role, receptor for neuropeptide Y and peptide YY. The activity of this receptor is mediated by G proteins that inhibit adenylate cyclase activity. Seems to be associated with food intake. Could be involved in feeding disorders. This chain is Neuropeptide Y receptor type 5 (Npy5r), found in Rattus norvegicus (Rat).